Reading from the N-terminus, the 107-residue chain is U1-lycotoxin-Ls1s (107 aa).

A signal peptide spans 1–20 (MMKVLVVVALLVTLISYSSS). Residues 21–41 (EGIDDLEADELLSLMANEQTR) constitute a propeptide that is removed on maturation. Intrachain disulfides connect Cys-44–Cys-59, Cys-51–Cys-68, Cys-58–Cys-86, and Cys-70–Cys-84.

The protein belongs to the neurotoxin 19 (CSTX) family. 04 (U1-Lctx) subfamily. As to expression, expressed by the venom gland.

The protein resides in the secreted. The polypeptide is U1-lycotoxin-Ls1s (Lycosa singoriensis (Wolf spider)).